The primary structure comprises 148 residues: Large ribosomal subunit protein uL15 (148 aa).

The tract at residues 1 to 57 (MRLNDVKPQKGSKKRRRRVGRGISAGQGASAGLGMRGQKSRSGSGTRPGFEGGQQPL) is disordered. Basic residues predominate over residues 10 to 20 (KGSKKRRRRVG). Residues 23–35 (ISAGQGASAGLGM) are compositionally biased toward gly residues.

It belongs to the universal ribosomal protein uL15 family. Part of the 50S ribosomal subunit.

Its function is as follows. Binds to the 23S rRNA. This is Large ribosomal subunit protein uL15 from Trichormus variabilis (strain ATCC 29413 / PCC 7937) (Anabaena variabilis).